The primary structure comprises 508 residues: Maturase K (508 aa).

This sequence belongs to the intron maturase 2 family. MatK subfamily.

Its subcellular location is the plastid. It localises to the chloroplast. Functionally, usually encoded in the trnK tRNA gene intron. Probably assists in splicing its own and other chloroplast group II introns. The chain is Maturase K from Ranunculus trichophyllus (Whitewater crowfoot).